The following is a 153-amino-acid chain: Aspartate carbamoyltransferase regulatory chain (153 aa).

Zn(2+) is bound by residues cysteine 109, cysteine 114, cysteine 138, and cysteine 141.

It belongs to the PyrI family. Contains catalytic and regulatory chains. Requires Zn(2+) as cofactor.

In terms of biological role, involved in allosteric regulation of aspartate carbamoyltransferase. The protein is Aspartate carbamoyltransferase regulatory chain of Vibrio campbellii (strain ATCC BAA-1116).